The primary structure comprises 264 residues: Indole-3-glycerol phosphate synthase (264 aa).

It belongs to the TrpC family.

It catalyses the reaction 1-(2-carboxyphenylamino)-1-deoxy-D-ribulose 5-phosphate + H(+) = (1S,2R)-1-C-(indol-3-yl)glycerol 3-phosphate + CO2 + H2O. Its pathway is amino-acid biosynthesis; L-tryptophan biosynthesis; L-tryptophan from chorismate: step 4/5. This Stenotrophomonas maltophilia (strain R551-3) protein is Indole-3-glycerol phosphate synthase.